Reading from the N-terminus, the 97-residue chain is Small ribosomal subunit protein bS20c (97 aa).

Residues 1-15 (MSKNVSAIKKNQVSL) show a composition bias toward polar residues. The segment at 1–20 (MSKNVSAIKKNQVSLRNKRK) is disordered.

The protein belongs to the bacterial ribosomal protein bS20 family.

The protein localises to the plastid. It localises to the chloroplast. Functionally, binds directly to 16S ribosomal RNA. The sequence is that of Small ribosomal subunit protein bS20c from Gracilaria tenuistipitata var. liui (Red alga).